The chain runs to 243 residues: Ribonuclease PH (243 aa).

Phosphate is bound by residues Arg91 and 129-131 (GTR).

This sequence belongs to the RNase PH family. As to quaternary structure, homohexameric ring arranged as a trimer of dimers.

The catalysed reaction is tRNA(n+1) + phosphate = tRNA(n) + a ribonucleoside 5'-diphosphate. In terms of biological role, phosphorolytic 3'-5' exoribonuclease that plays an important role in tRNA 3'-end maturation. Removes nucleotide residues following the 3'-CCA terminus of tRNAs; can also add nucleotides to the ends of RNA molecules by using nucleoside diphosphates as substrates, but this may not be physiologically important. Probably plays a role in initiation of 16S rRNA degradation (leading to ribosome degradation) during starvation. The polypeptide is Ribonuclease PH (Burkholderia lata (strain ATCC 17760 / DSM 23089 / LMG 22485 / NCIMB 9086 / R18194 / 383)).